The following is a 903-amino-acid chain: Protein translocase subunit SecA (903 aa).

Residues Gln-85, 103-107 (GEGKT), and Asp-492 each bind ATP. Residues 863–890 (GDGVKQPVRRDKKVGRNSPCPCGSGKKY) are disordered. 4 residues coordinate Zn(2+): Cys-882, Cys-884, Cys-893, and Cys-894.

It belongs to the SecA family. As to quaternary structure, monomer and homodimer. Part of the essential Sec protein translocation apparatus which comprises SecA, SecYEG and auxiliary proteins SecDF. Other proteins may also be involved. It depends on Zn(2+) as a cofactor.

Its subcellular location is the cell membrane. The protein resides in the cytoplasm. The catalysed reaction is ATP + H2O + cellular proteinSide 1 = ADP + phosphate + cellular proteinSide 2.. Part of the Sec protein translocase complex. Interacts with the SecYEG preprotein conducting channel. Has a central role in coupling the hydrolysis of ATP to the transfer of proteins into and across the cell membrane, serving as an ATP-driven molecular motor driving the stepwise translocation of polypeptide chains across the membrane. This chain is Protein translocase subunit SecA, found in Desulforudis audaxviator (strain MP104C).